The primary structure comprises 532 residues: Intercellular adhesion molecule 1 (532 aa).

The first 27 residues, 1 to 27 (MAPSGPQPALPILVVLLGALLLGPGNA), serve as a signal peptide directing secretion. At 28 to 480 (QTSVFPPEVI…TVNVLSPRYE (453 aa)) the chain is on the extracellular side. Ig-like C2-type domains follow at residues 41–103 (GGSV…QSSA) and 128–193 (GKNL…LDLR). Asparagine 47 carries an N-linked (GlcNAc...) asparagine glycan. Cystine bridges form between cysteine 48–cysteine 92 and cysteine 52–cysteine 96. Asparagine 130 and asparagine 145 each carry an N-linked (GlcNAc...) asparagine glycan. Cysteine 135 and cysteine 186 are disulfide-bonded. Positions 152–154 (RGE) match the Cell attachment site; atypical motif. N-linked (GlcNAc...) asparagine glycans are attached at residues asparagine 183, asparagine 202, asparagine 267, asparagine 296, and asparagine 316. Residues 230 to 297 (DTQGTVVCSL…LLCGVMLGNQ (68 aa)) enclose the Ig-like C2-type 3 domain. A disulfide bond links cysteine 237 and cysteine 290. One can recognise an Ig-like C2-type 4 domain in the interval 325-378 (GTEVIVECEAHPRAKVMLNGVPAQPPGPRAQFLLKATPEDNGRSFSCSATLEVA). An intrachain disulfide couples cysteine 332 to cysteine 371. Residues asparagine 385 and asparagine 406 are each glycosylated (N-linked (GlcNAc...) asparagine). 3 disulfides stabilise this stretch: cysteine 403–cysteine 419, cysteine 419–cysteine 457, and cysteine 431–cysteine 457. Positions 412 to 464 (NSQQTPMCQAWGNPLPQLKCLKDGTFPLPIGQSVTVTRDLEGTYLCQARSTRG) constitute an Ig-like C2-type 5 domain. The helical transmembrane segment at 481-503 (VVIIPVVAAAVILGTAGVATYLY) threads the bilayer. The Cytoplasmic segment spans residues 504–532 (NRQRKIRKYRLQQAQNGTPMKPNTQATPP). Positions 513-532 (RLQQAQNGTPMKPNTQATPP) are disordered. Positions 515–532 (QQAQNGTPMKPNTQATPP) are enriched in polar residues. Residues threonine 521 and threonine 530 each carry the phosphothreonine modification.

This sequence belongs to the immunoglobulin superfamily. ICAM family. As to quaternary structure, homodimer. Interacts with MUC1 and promotes cell aggregation in epithelial cells. Interacts with ARHGEF26/SGEF. Interacts (on T cell side) with CD81, CD247 and CD9 at immunological synapses between antigen-presenting cells and T cells. Monoubiquitinated, which is promoted by MARCH9 and leads to endocytosis.

Its subcellular location is the membrane. In terms of biological role, ICAM proteins are ligands for the leukocyte adhesion protein LFA-1 (integrin alpha-L/beta-2). During leukocyte trans-endothelial migration, ICAM1 engagement promotes the assembly of endothelial apical cups through ARHGEF26/SGEF and RHOG activation. The sequence is that of Intercellular adhesion molecule 1 (ICAM1) from Macaca mulatta (Rhesus macaque).